We begin with the raw amino-acid sequence, 272 residues long: Ribonuclease HII (272 aa).

Positions 87–272 constitute an RNase H type-2 domain; the sequence is KYVAGVDEVG…HRMSFLKNIL (186 aa). A divalent metal cation contacts are provided by Asp-93, Glu-94, and Asp-188.

Belongs to the RNase HII family. Requires Mn(2+) as cofactor. The cofactor is Mg(2+).

It is found in the cytoplasm. It catalyses the reaction Endonucleolytic cleavage to 5'-phosphomonoester.. Its function is as follows. Endonuclease that specifically degrades the RNA of RNA-DNA hybrids. The chain is Ribonuclease HII from Clostridium perfringens (strain SM101 / Type A).